A 516-amino-acid polypeptide reads, in one-letter code: uncharacterized protein (516 aa).

The next 5 helical transmembrane spans lie at 10–27 (IRYPELALFLVIAAGYWI), 32–54 (IGAFSLGPVTGALFAGLVVGDFA), 64–83 (SFLFLLFLFGVGYSVGPQFV), 95–117 (LLAVVVCLTGLAAAIAVGRILGL), and 165–187 (AVCYIFGYAGVIMWCTVVAPALL). RCK C-terminal domains lie at 208-291 (KPGL…SRAE) and 296-376 (RELL…NIGV). Transmembrane regions (helical) follow at residues 386 to 408 (FVVLGLAIFFGGVVGVLVSFPVG), 412 to 430 (IALSTSVGTLLAGLLVGHL), 443 to 465 (GAISLMTSLGLAAFVGLTGIHAG), and 480 to 502 (LLGGMVVTLLPQIVGFCFGHFVL).

This sequence belongs to the AAE transporter (TC 2.A.81) family.

The protein resides in the cell membrane. This is an uncharacterized protein from Bradyrhizobium diazoefficiens (strain JCM 10833 / BCRC 13528 / IAM 13628 / NBRC 14792 / USDA 110).